A 29-amino-acid chain; its full sequence is MDIVSLAWAALMVVFSFSLSLVVWGRSGL.

A helical transmembrane segment spans residues 3 to 23 (IVSLAWAALMVVFSFSLSLVV).

This sequence belongs to the PetN family. In terms of assembly, the 4 large subunits of the cytochrome b6-f complex are cytochrome b6, subunit IV (17 kDa polypeptide, PetD), cytochrome f and the Rieske protein, while the 4 small subunits are PetG, PetL, PetM and PetN. The complex functions as a dimer.

The protein localises to the plastid. It is found in the chloroplast thylakoid membrane. Component of the cytochrome b6-f complex, which mediates electron transfer between photosystem II (PSII) and photosystem I (PSI), cyclic electron flow around PSI, and state transitions. This Glycine max (Soybean) protein is Cytochrome b6-f complex subunit 8.